The following is a 291-amino-acid chain: Elongation factor Ts (291 aa).

The tract at residues 78-81 is involved in Mg(2+) ion dislocation from EF-Tu; sequence TDFV.

It belongs to the EF-Ts family.

The protein localises to the cytoplasm. Functionally, associates with the EF-Tu.GDP complex and induces the exchange of GDP to GTP. It remains bound to the aminoacyl-tRNA.EF-Tu.GTP complex up to the GTP hydrolysis stage on the ribosome. The sequence is that of Elongation factor Ts from Ureaplasma parvum serovar 3 (strain ATCC 27815 / 27 / NCTC 11736).